The primary structure comprises 579 residues: Tetratricopeptide repeat protein 39C (579 aa).

A compositionally biased stretch (polar residues) spans 182–197 (QQGALASDQANHNTST). The segment at 182 to 202 (QQGALASDQANHNTSTGSGGR) is disordered. 3 TPR repeats span residues 311-344 (SLFI…ASDQ), 349-382 (HVCL…SRWS), and 481-514 (GLKH…EYGR).

The protein belongs to the TTC39 family.

The polypeptide is Tetratricopeptide repeat protein 39C (ttc39c) (Danio rerio (Zebrafish)).